The chain runs to 508 residues: ADP-ribosylarginine hydrolase CG3568 (508 aa).

The ADP-D-ribose site is built by Arg-209, Gly-349, Gly-351, Gly-353, Val-354, Trp-355, Trp-390, Asp-441, Asn-448, Glu-449, Gly-459, and Asp-460.

It catalyses the reaction N(omega)-(ADP-D-ribosyl)-L-arginyl-[protein] + H2O = ADP-D-ribose + L-arginyl-[protein]. The catalysed reaction is N(omega)-(ADP-D-ribosyl)-L-arginine + H2O = ADP-D-ribose + L-arginine. Protein ADP-ribosyl hydrolase that specifically removes mono-ADP-ribosyl modifications from protein arginine residues. This chain is ADP-ribosylarginine hydrolase CG3568, found in Drosophila melanogaster (Fruit fly).